Consider the following 140-residue polypeptide: Histone H3-like centromeric protein A (140 aa).

The interval 1 to 46 (MGPRRRSRKPEAPRRRSPSPTPTPGPSRRGPSLGASSHQHSRRRQG) is disordered. Glycine 2 is modified (n,N,N-trimethylglycine). Position 7 is a phosphoserine; by AURKA and AURKB (serine 7). Residues serine 17, serine 19, and serine 27 each carry the phosphoserine modification. Residues 26-37 (PSRRGPSLGASS) are compositionally biased toward low complexity. Residues 39–54 (QHSRRRQGWLKEIRKL) form an important for flexibility of DNA ends that protrude from nucleosomes region. Position 68 is a phosphoserine (serine 68). The segment at 75 to 116 (CVKFTRGVDFNWQAQALLALQEAAEAFLVHLFEDAYLLTLHA) is CATD.

It belongs to the histone H3 family. As to quaternary structure, component of centromeric nucleosomes, where DNA is wrapped around a histone octamer core. The octamer contains two molecules each of H2A, H2B, CENPA and H4 assembled in one CENPA-H4 heterotetramer and two H2A-H2B heterodimers. CENPA modulates the DNA-binding characteristics of nucleosomes so that protruding DNA ends have higher flexibility than in nucleosomes containing conventional histone H3. Inhibits binding of histone H1 to nucleosomes, since histone H1 binds preferentially to rigid DNA linkers that protrude from nucleosomes. Nucleosomes containing CENPA also contain histone H2A variants such as MACROH2A and H2A.Z/H2AZ1. The CENPA-H4 heterotetramer is more compact and structurally more rigid than corresponding H3-H4 heterotetramers. Can assemble into nucleosomes that contain both CENPA and histone H3.3; these nucleosomes interact with a single CENPC chain. Heterotrimer composed of HJURP, CENPA and histone H4, where HJURP interacts with the dimer formed by CENPA and histone H4 and prevents tetramerization of CENPA and H4. Component of the CENPA-NAC complex, at least composed of CENPA, CENPC, CENPH, CENPM, CENPN, CENPT and CENPU. Interacts (via CATD domain) with HJURP; the interaction is direct and is required for its localization to centromeres. Interacts with CENPC, CENPN and CENPT; interaction is direct. Part of a centromere complex consisting of CENPA, CENPT and CENPW. Identified in centromere complexes containing histones H2A, H2B and H4, and at least CENPA, CENPB, CENPC, CENPT, CENPN, HJURP, SUPT16H, SSRP1 and RSF1. Can self-associate. The CENPA-H4 heterotetramer can bind DNA by itself (in vitro). Interacts with CDK1, PPP1CA and RBBP7. In terms of assembly, (Microbial infection) Interacts directly with herpes virus HHV-1 protein ICP0. Ubiquitinated. Interaction with herpes virus HSV-1 ICP0 protein, leads to its degradation by the proteasome pathway. In terms of processing, trimethylated by NTMT1 at the N-terminal glycine after cleavage of Met-1. Methylation is low before incorporation into nucleosomes and increases with cell cycle progression, with the highest levels in mitotic nucleosomes. Post-translationally, phosphorylated by CDK1 at Ser-68 during early mitosis; this abolishes association with chromatin and centromeres, prevents interaction with HJURP and thereby prevents premature assembly of CENPA into centromeres. Dephosphorylated at Ser-68 by PPP1CA during late mitosis. Phosphorylation of Ser-7 by AURKA and AURKB during prophase is required for localization of AURKA and AURKB at inner centromere and is essential for normal cytokinesis. Initial phosphorylation during prophase is mediated by AURKA and is maintained by AURKB. Poly-ADP-ribosylated by PARP1.

It localises to the nucleus. The protein localises to the chromosome. The protein resides in the centromere. Histone H3-like nucleosomal protein that is specifically found in centromeric nucleosomes. Replaces conventional H3 in the nucleosome core of centromeric chromatin that serves as an assembly site for the inner kinetochore. The presence of CENPA subtly modifies the nucleosome structure and the way DNA is wrapped around the nucleosome and gives rise to protruding DNA ends that are less well-ordered and rigid compared to nucleosomes containing histone H3. May serve as an epigenetic mark that propagates centromere identity through replication and cell division. Required for recruitment and assembly of kinetochore proteins, and as a consequence required for progress through mitosis, chromosome segregation and cytokinesis. This chain is Histone H3-like centromeric protein A (CENPA), found in Homo sapiens (Human).